Consider the following 548-residue polypeptide: Zinc metalloproteinase (548 aa).

The N-terminal stretch at 1-28 (MKKYYAVTGIALAVGMLCTTQLAGATQA) is a signal peptide. Zn(2+) is bound at residue His-362. Residue Glu-363 is part of the active site. 2 residues coordinate Zn(2+): His-366 and Glu-386. The disordered stretch occupies residues 440–459 (SNWKPTATNPNDNNDQGGVH). Residues 442–459 (WKPTATNPNDNNDQGGVH) show a composition bias toward polar residues. Catalysis depends on His-459, which acts as the Proton donor.

This sequence belongs to the peptidase M4 family. It depends on Ca(2+) as a cofactor. Zn(2+) is required as a cofactor.

The protein localises to the secreted. Its subcellular location is the cell wall. In terms of biological role, zinc metalloprotease with hemolytic properties. The chain is Zinc metalloproteinase (hly) from Renibacterium salmoninarum.